The chain runs to 232 residues: Phosphatidylserine decarboxylase proenzyme (232 aa).

The Schiff-base intermediate with substrate; via pyruvic acid role is filled by S190. At S190 the chain carries Pyruvic acid (Ser); by autocatalysis.

This sequence belongs to the phosphatidylserine decarboxylase family. PSD-A subfamily. Heterodimer of a large membrane-associated beta subunit and a small pyruvoyl-containing alpha subunit. Requires pyruvate as cofactor. Post-translationally, is synthesized initially as an inactive proenzyme. Formation of the active enzyme involves a self-maturation process in which the active site pyruvoyl group is generated from an internal serine residue via an autocatalytic post-translational modification. Two non-identical subunits are generated from the proenzyme in this reaction, and the pyruvate is formed at the N-terminus of the alpha chain, which is derived from the carboxyl end of the proenzyme. The post-translation cleavage follows an unusual pathway, termed non-hydrolytic serinolysis, in which the side chain hydroxyl group of the serine supplies its oxygen atom to form the C-terminus of the beta chain, while the remainder of the serine residue undergoes an oxidative deamination to produce ammonia and the pyruvoyl prosthetic group on the alpha chain.

It localises to the cell membrane. The catalysed reaction is a 1,2-diacyl-sn-glycero-3-phospho-L-serine + H(+) = a 1,2-diacyl-sn-glycero-3-phosphoethanolamine + CO2. It functions in the pathway phospholipid metabolism; phosphatidylethanolamine biosynthesis; phosphatidylethanolamine from CDP-diacylglycerol: step 2/2. Its function is as follows. Catalyzes the formation of phosphatidylethanolamine (PtdEtn) from phosphatidylserine (PtdSer). The protein is Phosphatidylserine decarboxylase proenzyme of Bartonella henselae (strain ATCC 49882 / DSM 28221 / CCUG 30454 / Houston 1) (Rochalimaea henselae).